Consider the following 654-residue polypeptide: DNA ligase (654 aa).

NAD(+)-binding positions include 37–41 (DEEYD), 86–87 (SM), and glutamate 113. Residue lysine 115 is the N6-AMP-lysine intermediate of the active site. 3 residues coordinate NAD(+): arginine 136, glutamate 170, and lysine 308. Residues cysteine 402, cysteine 405, cysteine 418, and cysteine 423 each contribute to the Zn(2+) site. The 79-residue stretch at 576–654 (ITQNAFSGKS…GEFERLKLEI (79 aa)) folds into the BRCT domain.

It belongs to the NAD-dependent DNA ligase family. LigA subfamily. Mg(2+) serves as cofactor. It depends on Mn(2+) as a cofactor.

It catalyses the reaction NAD(+) + (deoxyribonucleotide)n-3'-hydroxyl + 5'-phospho-(deoxyribonucleotide)m = (deoxyribonucleotide)n+m + AMP + beta-nicotinamide D-nucleotide.. Functionally, DNA ligase that catalyzes the formation of phosphodiester linkages between 5'-phosphoryl and 3'-hydroxyl groups in double-stranded DNA using NAD as a coenzyme and as the energy source for the reaction. It is essential for DNA replication and repair of damaged DNA. The protein is DNA ligase of Campylobacter curvus (strain 525.92).